Consider the following 238-residue polypeptide: Probable transcriptional regulatory protein CF0838 (238 aa).

Belongs to the TACO1 family.

It localises to the cytoplasm. This is Probable transcriptional regulatory protein CF0838 from Chlamydia felis (strain Fe/C-56) (Chlamydophila felis).